The sequence spans 136 residues: Protein NrdI (136 aa).

This sequence belongs to the NrdI family.

In terms of biological role, probably involved in ribonucleotide reductase function. This Salmonella typhi protein is Protein NrdI.